We begin with the raw amino-acid sequence, 329 residues long: Phosphate import ATP-binding protein PstB (329 aa).

Residues F83–I325 form the ABC transporter domain. Residue G116–S123 coordinates ATP.

The protein belongs to the ABC transporter superfamily. Phosphate importer (TC 3.A.1.7) family. The complex is composed of two ATP-binding proteins (PstB), two transmembrane proteins (PstC and PstA) and a solute-binding protein (PstS).

The protein localises to the cell membrane. It catalyses the reaction phosphate(out) + ATP + H2O = ADP + 2 phosphate(in) + H(+). Functionally, part of the ABC transporter complex PstSACB involved in phosphate import. Responsible for energy coupling to the transport system. The chain is Phosphate import ATP-binding protein PstB from Mycoplasma genitalium (strain ATCC 33530 / DSM 19775 / NCTC 10195 / G37) (Mycoplasmoides genitalium).